The primary structure comprises 123 residues: Small ribosomal subunit protein uS12 (123 aa).

3-methylthioaspartic acid is present on aspartate 89.

The protein belongs to the universal ribosomal protein uS12 family. Part of the 30S ribosomal subunit. Contacts proteins S8 and S17. May interact with IF1 in the 30S initiation complex.

Functionally, with S4 and S5 plays an important role in translational accuracy. In terms of biological role, interacts with and stabilizes bases of the 16S rRNA that are involved in tRNA selection in the A site and with the mRNA backbone. Located at the interface of the 30S and 50S subunits, it traverses the body of the 30S subunit contacting proteins on the other side and probably holding the rRNA structure together. The combined cluster of proteins S8, S12 and S17 appears to hold together the shoulder and platform of the 30S subunit. The chain is Small ribosomal subunit protein uS12 from Syntrophotalea carbinolica (strain DSM 2380 / NBRC 103641 / GraBd1) (Pelobacter carbinolicus).